The chain runs to 541 residues: MGFFSTILGFCGFGVGISLGLVIGYVLFVYLLPNDVKDPEIRSIADQDPKAMLRMLPEIPLWVKNPDFDRVDWINRFLEYMWPYLDKAICKTAKNIAKPIIEEQIPKYKIDSVEFETLTLGSLPPTFQGMKVYLTDEKELIMEPCLKWAANPNILVAIKAFGLKATVQVVDLQVFAQPRITLKPLVPSFPCFANIYVSLMEKPHVDFGLKLGGADLMSIPGLYRFVQEQIKDQVANMYLWPKTLVVPILDPAKAFRRPVGIVHVKVVRAVGLRKKDLMGGADPFVKIKLSEDKIPSKKTTVKHKNLNPEWNEEFKFSVRDPQTQVLEFSVYDWEQVGNPEKMGMNVLALKEMVPDEHKAFTLELRKTLDGGEDGQPPDKYRGKLEVELLYKPFTEEEMPKGFEETQAVQKAPEGTPAAGGMLVVIVHSAEDVEGKHHTNPYVRIYFKGEERKTKHVKKNRDPRWNEEFTFMLEEPPVREKLHVEVLSTSSRIGLLHPKETLGYVDIPVVDVVNNKRMNQKFHLIDSKNGKIQIELEWRTAS.

At 1–11 (MGFFSTILGFC) the chain is on the extracellular side. A helical transmembrane segment spans residues 12–32 (GFGVGISLGLVIGYVLFVYLL). Residues 33 to 541 (PNDVKDPEIR…QIELEWRTAS (509 aa)) lie on the Cytoplasmic side of the membrane. Residues 67–249 (DFDRVDWINR…WPKTLVVPIL (183 aa)) form the SMP-LTD domain. A phospholipid binding region spans residues 227-509 (QEQIKDQVAN…TLGYVDIPVV (283 aa)). 2 C2 domains span residues 240-362 (WPKT…AFTL) and 401-521 (GFEE…NQKF). Ca(2+)-binding residues include aspartate 276, aspartate 282, aspartate 332, and glutamate 334.

The protein belongs to the synaptotagmin family. In terms of assembly, interacts with cabbage leaf curl virus (CaLCuV) BC1 protein and tobacco mosaic virus (TMV) MP protein. Interacts with ROSY1. It depends on Ca(2+) as a cofactor. As to expression, expressed in roots, shoots, rosette and cauline leaves, inflorescences, and siliques. In roots, expressed in vascular bundle, epidermis, the differential zone of the tips of root hairs, and the quiescent center and columella of root tips.

It is found in the cell membrane. It localises to the endosome membrane. Its function is as follows. Plays an important role in maintaining plasma membrane integrity during freezing and osmotic stresses. May function in membrane resealing during calcium-dependent freezing tolerance. May regulate endocytosis and endosome recycling at the plasma membrane and cell-to-cell trafficking of cabbage leaf curl virus (CaLCuV) and tobacco mosaic virus (TMV) movement proteins via plasmodesmata. This is Synaptotagmin-1 (SYT1) from Arabidopsis thaliana (Mouse-ear cress).